Reading from the N-terminus, the 698-residue chain is Elongation factor G 1 (698 aa).

Residues 8-290 (ERYRNIGICA…AVVEFLPAPV (283 aa)) form the tr-type G domain. Residues 17–24 (AHVDAGKT), 88–92 (DTPGH), and 142–145 (NKMD) contribute to the GTP site.

The protein belongs to the TRAFAC class translation factor GTPase superfamily. Classic translation factor GTPase family. EF-G/EF-2 subfamily.

The protein resides in the cytoplasm. In terms of biological role, catalyzes the GTP-dependent ribosomal translocation step during translation elongation. During this step, the ribosome changes from the pre-translocational (PRE) to the post-translocational (POST) state as the newly formed A-site-bound peptidyl-tRNA and P-site-bound deacylated tRNA move to the P and E sites, respectively. Catalyzes the coordinated movement of the two tRNA molecules, the mRNA and conformational changes in the ribosome. The chain is Elongation factor G 1 from Shewanella sp. (strain MR-4).